A 929-amino-acid chain; its full sequence is DNA mismatch repair protein MutS (929 aa).

The segment at 22–46 (PAAPRSTGSAAAPPPSPAVLDDRSG) is disordered. Positions 23-32 (AAPRSTGSAA) are enriched in low complexity. An ATP-binding site is contributed by 678 to 685 (GPNMAGKS).

Belongs to the DNA mismatch repair MutS family.

In terms of biological role, this protein is involved in the repair of mismatches in DNA. It is possible that it carries out the mismatch recognition step. This protein has a weak ATPase activity. This is DNA mismatch repair protein MutS from Rhodospirillum rubrum (strain ATCC 11170 / ATH 1.1.1 / DSM 467 / LMG 4362 / NCIMB 8255 / S1).